A 302-amino-acid chain; its full sequence is Dihydroorotate dehydrogenase B (NAD(+)), catalytic subunit (302 aa).

FMN is bound by residues Ser-23 and 47 to 48 (KG). Residues Lys-47 and 71-75 (NSVGL) each bind substrate. Residues Asn-101 and Asn-128 each coordinate FMN. Asn-128 provides a ligand contact to substrate. The active-site Nucleophile is the Cys-131. Residues Lys-166 and Ile-192 each contribute to the FMN site. 193–194 (NT) is a binding site for substrate. FMN is bound by residues Gly-218, 244 to 245 (GG), and 266 to 267 (GT).

The protein belongs to the dihydroorotate dehydrogenase family. Type 1 subfamily. In terms of assembly, heterotetramer of 2 PyrK and 2 PyrD type B subunits. The cofactor is FMN.

Its subcellular location is the cytoplasm. The catalysed reaction is (S)-dihydroorotate + NAD(+) = orotate + NADH + H(+). Its pathway is pyrimidine metabolism; UMP biosynthesis via de novo pathway; orotate from (S)-dihydroorotate (NAD(+) route): step 1/1. In terms of biological role, catalyzes the conversion of dihydroorotate to orotate with NAD(+) as electron acceptor. In Alkaliphilus oremlandii (strain OhILAs) (Clostridium oremlandii (strain OhILAs)), this protein is Dihydroorotate dehydrogenase B (NAD(+)), catalytic subunit (pyrD).